Consider the following 248-residue polypeptide: Myelin protein P0 (248 aa).

The signal sequence occupies residues 1–29; that stretch reads MAPGAPSSSPSPILAVLLFSSLVLSPAQA. One can recognise an Ig-like V-type domain in the interval 30–143; sequence IVVYTDREVH…DIVGKTSQVT (114 aa). The Extracellular portion of the chain corresponds to 30 to 153; it reads IVVYTDREVH…LYVFEKVPTR (124 aa). Residues Cys50 and Cys127 are joined by a disulfide bond. An N-linked (GlcNAc...) (complex) asparagine glycan is attached at Asn122. Residues 154–179 traverse the membrane as a helical segment; it reads YGVVLGAVIGGVLGVVLLLLLLFYVV. The Cytoplasmic segment spans residues 180–248; the sequence is RYCWLRRQAA…GLGESRKDKK (69 aa). Ser210 carries the post-translational modification Phosphoserine; by PKC. The interval 224–248 is disordered; it reads DHSRSTKAVSEKKAKGLGESRKDKK. 2 positions are modified to phosphoserine: Ser226 and Ser228. Residues Ser233 and Ser243 each carry the phosphoserine; by PKC modification.

Belongs to the myelin P0 protein family. As to quaternary structure, homodimer and homotetramer. In terms of processing, N-glycosylated; contains sulfate-substituted glycan. As to expression, found only in peripheral nervous system Schwann cells.

It is found in the cell membrane. It localises to the myelin membrane. Its function is as follows. Is an adhesion molecule necessary for normal myelination in the peripheral nervous system. It mediates adhesion between adjacent myelin wraps and ultimately drives myelin compaction. The polypeptide is Myelin protein P0 (MPZ) (Homo sapiens (Human)).